Reading from the N-terminus, the 89-residue chain is Elongation factor 1-beta (89 aa).

This sequence belongs to the EF-1-beta/EF-1-delta family.

Its function is as follows. Promotes the exchange of GDP for GTP in EF-1-alpha/GDP, thus allowing the regeneration of EF-1-alpha/GTP that could then be used to form the ternary complex EF-1-alpha/GTP/AAtRNA. In Methanococcus maripaludis (strain C6 / ATCC BAA-1332), this protein is Elongation factor 1-beta.